The primary structure comprises 118 residues: Large ribosomal subunit protein uL18 (118 aa).

It belongs to the universal ribosomal protein uL18 family. Part of the 50S ribosomal subunit; part of the 5S rRNA/L5/L18/L25 subcomplex. Contacts the 5S and 23S rRNAs.

In terms of biological role, this is one of the proteins that bind and probably mediate the attachment of the 5S RNA into the large ribosomal subunit, where it forms part of the central protuberance. The polypeptide is Large ribosomal subunit protein uL18 (Cupriavidus pinatubonensis (strain JMP 134 / LMG 1197) (Cupriavidus necator (strain JMP 134))).